The sequence spans 494 residues: Anaerobic nitric oxide reductase flavorubredoxin (494 aa).

Residues 30–210 form a zinc metallo-hydrolase region; sequence TKGTSYNSYL…PFSALVTAKI (181 aa). Fe cation contacts are provided by His-79, Glu-81, Asp-83, His-147, Asp-166, and His-227. A Flavodoxin-like domain is found at 254-393; sequence ITIFYDSMSN…ECREHGQQIA (140 aa). FMN is bound by residues 260–264 and 342–369; these read SMSNN and AFGS…ETAI. The Rubredoxin-like domain maps to 441 to 492; it reads CQCMVCTVCNWVYDPAKGEPNQGIEVGTTWADVPDYFLCPECHLGKDVFVEY. Fe cation-binding residues include Cys-446, Cys-449, Cys-479, and Cys-482.

The protein in the N-terminal section; belongs to the zinc metallo-hydrolase group 3 family. Homotetramer. Requires Fe cation as cofactor. The cofactor is FMN.

The protein resides in the cytoplasm. It participates in nitrogen metabolism; nitric oxide reduction. In terms of biological role, anaerobic nitric oxide reductase; uses NADH to detoxify nitric oxide (NO), protecting several 4Fe-4S NO-sensitive enzymes. Has at least 2 reductase partners, only one of which (NorW, flavorubredoxin reductase) has been identified. NO probably binds to the di-iron center; electrons enter from the NorW at rubredoxin and are transferred sequentially to the FMN center and the di-iron center. Also able to function as an aerobic oxygen reductase. This chain is Anaerobic nitric oxide reductase flavorubredoxin, found in Vibrio vulnificus (strain YJ016).